A 372-amino-acid polypeptide reads, in one-letter code: Cobalt-precorrin-5B C(1)-methyltransferase (372 aa).

This sequence belongs to the CbiD family.

It carries out the reaction Co-precorrin-5B + S-adenosyl-L-methionine = Co-precorrin-6A + S-adenosyl-L-homocysteine. It participates in cofactor biosynthesis; adenosylcobalamin biosynthesis; cob(II)yrinate a,c-diamide from sirohydrochlorin (anaerobic route): step 6/10. Functionally, catalyzes the methylation of C-1 in cobalt-precorrin-5B to form cobalt-precorrin-6A. The sequence is that of Cobalt-precorrin-5B C(1)-methyltransferase from Prochlorococcus marinus (strain MIT 9515).